Consider the following 609-residue polypeptide: Pair-rule protein odd-paired (609 aa).

Residues 20 to 41 (RMSPNTTASNSNAQQQQQQQLE) are disordered. The span at 22-32 (SPNTTASNSNA) shows a compositional bias: polar residues. A C2H2-type 1; atypical zinc finger spans residues 210–249 (MQCLWIDPDQPGLVPPGGRKTCNKVFHSMHEIVTHLTVEH). C2H2-type zinc fingers lie at residues 258-285 (HACF…IRVH), 291-315 (FACP…KRTH), 321-345 (FKCE…SHVH), and 351-375 (YNCR…MKVH). 2 disordered regions span residues 373-550 (KVHG…ASAS) and 583-609 (EAMN…ATAY). Residues 399-409 (IITGGAQTPPS) show a composition bias toward polar residues. Low complexity-rich tracts occupy residues 414–434 (GSAG…IKSS) and 449–498 (HLGA…LTAH). The segment covering 528-537 (SHHHHPHHHQ) has biased composition (basic residues). Residues 538–550 (AAPSPGAAAASAS) are compositionally biased toward low complexity. Positions 591 to 601 (FGHHHHHHHLM) are enriched in basic residues.

It belongs to the GLI C2H2-type zinc-finger protein family. Expressed throughout all segment primordia; expressed ubiquitously in the ectoderm and mesoderm precursors.

It is found in the nucleus. Functionally, transcription factor essential for parasegmental subdivision of the embryo. It is involved in the activation of wingless (wg) in odd parasegments. It is also required for the timely activation of wg in the remaining parasegments and for the timely activation of engrailed (en) in all parasegments. This is Pair-rule protein odd-paired (opa) from Drosophila melanogaster (Fruit fly).